A 492-amino-acid polypeptide reads, in one-letter code: Putative BTB/POZ domain and WD-repeat protein R786 (492 aa).

Residues 16–86 (TDVEIVLIDE…FYGQIVDSTN (71 aa)) form the BTB domain. 2 WD repeats span residues 241–281 (QSSC…IKIK) and 286–325 (LINR…SKGI).

Belongs to the mimivirus BTB/WD family.

This Acanthamoeba polyphaga (Amoeba) protein is Putative BTB/POZ domain and WD-repeat protein R786.